The sequence spans 475 residues: uncharacterized protein (475 aa).

This is an uncharacterized protein from Acheta domesticus (House cricket).